A 711-amino-acid polypeptide reads, in one-letter code: Ribosomal RNA large subunit methyltransferase K/L (711 aa).

The region spanning 43-154 is the THUMP domain; it reads LAYRITLWTR…NGVITIAMNF (112 aa).

It belongs to the methyltransferase superfamily. RlmKL family.

It localises to the cytoplasm. The catalysed reaction is guanosine(2445) in 23S rRNA + S-adenosyl-L-methionine = N(2)-methylguanosine(2445) in 23S rRNA + S-adenosyl-L-homocysteine + H(+). The enzyme catalyses guanosine(2069) in 23S rRNA + S-adenosyl-L-methionine = N(2)-methylguanosine(2069) in 23S rRNA + S-adenosyl-L-homocysteine + H(+). In terms of biological role, specifically methylates the guanine in position 2445 (m2G2445) and the guanine in position 2069 (m7G2069) of 23S rRNA. The polypeptide is Ribosomal RNA large subunit methyltransferase K/L (Shewanella oneidensis (strain ATCC 700550 / JCM 31522 / CIP 106686 / LMG 19005 / NCIMB 14063 / MR-1)).